Consider the following 215-residue polypeptide: Autophagy-related protein 101 (215 aa).

Residues proline 124–arginine 147 form a disordered region.

The protein belongs to the ATG101 family. In terms of assembly, interacts with ATG11 and ATG13A.

It is found in the cytoplasmic vesicle. The protein localises to the autophagosome. Functionally, accessory protein involved in autophagy. Acts as a scaffold protein of the ATG1-ATG13 complex for faithful delivery of autophagic vesicles to the vacuole. Required for selective mitophagy. This chain is Autophagy-related protein 101, found in Arabidopsis thaliana (Mouse-ear cress).